The following is a 327-amino-acid chain: G protein pathway suppressor 2 (327 aa).

The stretch at 14-109 (MARALHRHIM…RRRKEQSDLT (96 aa)) forms a coiled coil. Residues 26-65 (RERKRQEEEEVDKMMEQKMKEEQERRKKKEMEERMSLEET) are disordered. Residues Lys-45 and Lys-71 each participate in a glycyl lysine isopeptide (Lys-Gly) (interchain with G-Cter in SUMO1) cross-link. Residues 61–94 (SLEETKEQILKLQEKLSALQEEKHQLFLQLKKVL) form an interaction with SUMO region. 3 disordered regions span residues 178–208 (GQFQGSPGGAYGTAQPPPHYGPTQPAYSPSQ), 253–285 (QKQMEHANQQTSFSDSSSLRPMHPQALHPAPGL), and 300–327 (KSGFATTSQPGPRLPFIQHSQNPRFYHK). A compositionally biased stretch (polar residues) spans 253-271 (QKQMEHANQQTSFSDSSSL). Arg-312 is subject to Asymmetric dimethylarginine. The span at 317–327 (QHSQNPRFYHK) shows a compositional bias: polar residues. Arg-323 is modified (asymmetric dimethylarginine; alternate). Position 323 is an omega-N-methylarginine; alternate (Arg-323).

Component of the N-Cor repressor complex, at least composed of NCOR1, NCOR2, HDAC3, TBL1X, TBL1R, CORO2A and GPS2. Interacts (when sumoylated at Lys-71) with TBL1X; leading to protect GPS2 from degradation by the proteasome. Interacts with UBE2N; leading to inhibit UBE2N/Ubc13 activity. Interacts with TRAF1. Interacts with TRAF2. Interacts with TRAF6. Interacts with PPARG (when in the liganded conformation). Interacts with (sumoylated) NR1H2; interaction with sumoylated NR1H2 and NR5A2 onto hepatic acute phase protein promoters prevents N-Cor corepressor complex dissociation. Interacts with (sumoylated) NR5A2; interaction with sumoylated NR1H2 and NR5A2 onto hepatic acute phase protein promoters prevents N-Cor corepressor complex dissociation. Interacts with NR1H3. Interacts with RFX4. Interacts with ANKRD26. Post-translationally, sumoylation regulates its subcellular location. Sumoylation at Lys-45 and Lys-71 regulates the shuttling between the cytoplasm and the nucleus. Sumoylation at Lys-71 is required for interaction with TBL1X. Sumoylated at Lys-45 and Lys-71 in mitochondrion. Desumoylation by SENP1 leads to relocation from the mitochondria to the nucleus. In terms of processing, ubiquitinated at the C-terminus by SIAH2; leading to its degradation by the proteasome. Interaction with TBL1X and methylation at Arg-323 protect GPS2 against ubiquitination and degradation. Methylated at Arg-312 and Arg-323 by PRMT6. Methylation at Arg-323 protects from degradation by the proteasome.

It is found in the nucleus. It localises to the mitochondrion. Its subcellular location is the cytoplasm. The protein resides in the cytosol. Its function is as follows. Key regulator of inflammation, lipid metabolism and mitochondrion homeostasis that acts by inhibiting the activity of the ubiquitin-conjugating enzyme UBE2N/Ubc13, thereby inhibiting 'Lys-63'-linked ubiquitination. In the nucleus, can both acts as a corepressor and coactivator of transcription, depending on the context. Acts as a transcription coactivator in adipocytes by promoting the recruitment of PPARG to promoters: acts by inhibiting the activity of the ubiquitin-conjugating enzyme UBE2N/Ubc13, leading to stabilization of KDM4A and subsequent histone H3 'Lys-9' (H3K9) demethylation. Promotes cholesterol efflux by acting as a transcription coactivator. Acts as a regulator of B-cell development by inhibiting UBE2N/Ubc13, thereby restricting the activation of Toll-like receptors (TLRs) and B-cell antigen receptors (BCRs) signaling pathways. Acts as a key mediator of mitochondrial stress response: in response to mitochondrial depolarization, relocates from the mitochondria to the nucleus following desumoylation and specifically promotes expression of nuclear-encoded mitochondrial genes. Promotes transcription of nuclear-encoded mitochondrial genes by inhibiting UBE2N/Ubc13. Can also act as a corepressor as part of the N-Cor repressor complex by repressing active PPARG. Plays an anti-inflammatory role in macrophages and is required for insulin sensitivity by acting as a corepressor. Plays an anti-inflammatory role during the hepatic acute phase response by interacting with sumoylated NR1H2 and NR5A2 proteins, thereby preventing N-Cor corepressor complex dissociation. In the cytosol, also plays a non-transcriptional role by regulating insulin signaling and pro-inflammatory pathways. In the cytoplasm, acts as a negative regulator of inflammation by inhibiting the pro-inflammatory TNF-alpha pathway; acts by repressing UBE2N/Ubc13 activity. In the cytoplasm of adipocytes, restricts the activation of insulin signaling via inhibition of UBE2N/Ubc13-mediated ubiquitination of AKT. Able to suppress G-protein- and mitogen-activated protein kinase-mediated signal transduction. The polypeptide is G protein pathway suppressor 2 (Mus musculus (Mouse)).